The following is a 506-amino-acid chain: Sodium-coupled neutral amino acid symporter 2 (506 aa).

The disordered stretch occupies residues 1 to 23 (MKKAEMGRFNISPDEDSSSYSSN). At 1-76 (MKKAEMGRFN…HPGTTSFGMS (76 aa)) the chain is on the cytoplasmic side. The regulates protein turnover upon amino acid deprivation stretch occupies residues 1-96 (MKKAEMGRFN…SGILGLSYAM (96 aa)). Residues Ser-12, Ser-21, Ser-22, and Ser-55 each carry the phosphoserine modification. A helical membrane pass occupies residues 77-96 (VFNLSNAIVGSGILGLSYAM). Position 82 (Asn-82) interacts with Na(+). Topologically, residues 97 to 102 (ANTGIA) are extracellular. The chain crosses the membrane as a helical span at residues 103-123 (LFIILLTFVSIFSLYSVHLLL). The Cytoplasmic portion of the chain corresponds to 124-158 (KTANEGGSLLYEQLGHKAFGMVGKLTASGSITMQN). A helical transmembrane segment spans residues 159-177 (IGAMSSYLFIVKYELPLVI). Residues 178-188 (QALMNIEDTNG) lie on the Extracellular side of the membrane. Residues 189-209 (LWYLNGDYLVLLVSLVLILPL) form a helical membrane-spanning segment. Residues 210-217 (SLLRNLGY) are Cytoplasmic-facing. The helical transmembrane segment at 218-238 (LGYTSGLSLLCMMFFLIVVIF) threads the bilayer. The Extracellular portion of the chain corresponds to 239-292 (KKFQISCPAEIAFLVNETVNSSLTQPATFLPDMGFNRTESDSCQPRYFIFNSQT). An intrachain disulfide couples Cys-245 to Cys-281. 2 N-linked (GlcNAc...) asparagine glycosylation sites follow: Asn-258 and Asn-274. Residues 293-313 (VYAVPILTFSFVCHPAILPIY) traverse the membrane as a helical segment. Residues 314 to 329 (EELKGRSRRRMMNVSK) lie on the Cytoplasmic side of the membrane. Residues 330-350 (ISFFAMFLMYLLAALFGYLTF) traverse the membrane as a helical segment. Topologically, residues 351–371 (YGHVESELLHTYSSVMETDIL) are extracellular. The helical transmembrane segment at 372–392 (LLIVRLAVLVAVTLTVPVVIF) threads the bilayer. A Na(+)-binding site is contributed by Thr-386. The Cytoplasmic segment spans residues 393-413 (PIRSSITHLLCASKEFSWWRH). Residues 414–434 (SVITVSILVFTNLLVIFVPNI) form a helical membrane-spanning segment. The Extracellular segment spans residues 435 to 436 (RD). Residues 437-457 (IFGFIGASAAAMLIFILPSAF) traverse the membrane as a helical segment. Over 458-472 (YIKLVKKEPMKSVQK) the chain is Cytoplasmic. The helical transmembrane segment at 473-495 (IGAMFFLLSGIVVMTGSMALIVL) threads the bilayer. The Extracellular segment spans residues 496–506 (DWVHNAPGGGH).

Belongs to the amino acid/polyamine transporter 2 family. Post-translationally, polyubiquitination by NEDD4L regulates the degradation and the activity of SLC38A2.

It is found in the cell membrane. It catalyses the reaction L-alanine(in) + Na(+)(in) = L-alanine(out) + Na(+)(out). It carries out the reaction glycine(in) + Na(+)(in) = glycine(out) + Na(+)(out). The catalysed reaction is L-serine(in) + Na(+)(in) = L-serine(out) + Na(+)(out). The enzyme catalyses L-proline(in) + Na(+)(in) = L-proline(out) + Na(+)(out). It catalyses the reaction L-methionine(in) + Na(+)(in) = L-methionine(out) + Na(+)(out). It carries out the reaction L-histidine(in) + Na(+)(in) = L-histidine(out) + Na(+)(out). The catalysed reaction is L-asparagine(in) + Na(+)(in) = L-asparagine(out) + Na(+)(out). The enzyme catalyses L-glutamine(in) + Na(+)(in) = L-glutamine(out) + Na(+)(out). It catalyses the reaction L-threonine(in) + Na(+)(in) = L-threonine(out) + Na(+)(out). It carries out the reaction L-leucine(in) + Na(+)(in) = L-leucine(out) + Na(+)(out). The catalysed reaction is L-phenylalanine(in) + Na(+)(in) = L-phenylalanine(out) + Na(+)(out). With respect to regulation, inhibited by N-methyl-D-glucamine. Inhibited by choline. Allosteric regulation of sodium ions binding by pH. In terms of biological role, symporter that cotransports neutral amino acids and sodium ions from the extracellular to the intracellular side of the cell membrane. The transport is pH-sensitive, Li(+)-intolerant, electrogenic, driven by the Na(+) electrochemical gradient and cotransports of neutral amino acids and sodium ions with a stoichiometry of 1:1. May function in the transport of amino acids at the blood-brain barrier. May function in the transport of amino acids in the supply of maternal nutrients to the fetus through the placenta. Maintains a key metabolic glutamine/glutamate balance underpinning retrograde signaling by dendritic release of the neurotransmitter glutamate. Transports L-proline in differentiating osteoblasts for the efficient synthesis of proline-enriched proteins and provides proline essential for osteoblast differentiation and bone formation during bone development. The chain is Sodium-coupled neutral amino acid symporter 2 from Bos taurus (Bovine).